The sequence spans 359 residues: Phospho-N-acetylmuramoyl-pentapeptide-transferase (359 aa).

10 consecutive transmembrane segments (helical) span residues 27–47 (IYAL…MMRW), 73–93 (TMGG…WADL), 94–114 (TNIY…VGFV), 134–154 (LLGQ…QPAY), 166–186 (FTPD…IGAS), 197–217 (GLAI…IYIA), 233–253 (GVGE…GFLW), 261–281 (LFMG…IAVL), 286–306 (LLLI…IMQV), and 336–356 (KIVI…LSTL).

The protein belongs to the glycosyltransferase 4 family. MraY subfamily. Requires Mg(2+) as cofactor.

The protein localises to the cell inner membrane. The enzyme catalyses UDP-N-acetyl-alpha-D-muramoyl-L-alanyl-gamma-D-glutamyl-meso-2,6-diaminopimeloyl-D-alanyl-D-alanine + di-trans,octa-cis-undecaprenyl phosphate = di-trans,octa-cis-undecaprenyl diphospho-N-acetyl-alpha-D-muramoyl-L-alanyl-D-glutamyl-meso-2,6-diaminopimeloyl-D-alanyl-D-alanine + UMP. It functions in the pathway cell wall biogenesis; peptidoglycan biosynthesis. Its function is as follows. Catalyzes the initial step of the lipid cycle reactions in the biosynthesis of the cell wall peptidoglycan: transfers peptidoglycan precursor phospho-MurNAc-pentapeptide from UDP-MurNAc-pentapeptide onto the lipid carrier undecaprenyl phosphate, yielding undecaprenyl-pyrophosphoryl-MurNAc-pentapeptide, known as lipid I. The polypeptide is Phospho-N-acetylmuramoyl-pentapeptide-transferase (Maridesulfovibrio salexigens (strain ATCC 14822 / DSM 2638 / NCIMB 8403 / VKM B-1763) (Desulfovibrio salexigens)).